Here is a 605-residue protein sequence, read N- to C-terminus: Ankyrin repeat domain-containing protein 13D (605 aa).

UIM domains follow at residues E482–E501 and E528–S547. Positions Q538–Q554 are enriched in low complexity. The tract at residues Q538–H605 is disordered. Phosphoserine is present on S552. T556 is subject to Phosphothreonine. Residues S564–L575 show a composition bias toward low complexity. UIM domains are found at residues S564–L583 and Q589–H605. The segment covering S576–Q589 has biased composition (basic and acidic residues).

In terms of assembly, interacts with EGFR (ubiquitinated); the interaction is direct and may regulate EGFR internalization.

Its subcellular location is the cell membrane. The protein localises to the late endosome. Its function is as follows. Ubiquitin-binding protein that specifically recognizes and binds 'Lys-63'-linked ubiquitin. Does not bind 'Lys-48'-linked ubiquitin. Positively regulates the internalization of ligand-activated EGFR by binding to the Ub moiety of ubiquitinated EGFR at the cell membrane. This Mus musculus (Mouse) protein is Ankyrin repeat domain-containing protein 13D (Ankrd13d).